Reading from the N-terminus, the 233-residue chain is Protein DOUBLE-STRAND BREAK FORMATION (233 aa).

Interacts with PRD1; this interaction facilitates a binding to PRD3. Specifically expressed in buds.

Its function is as follows. Required for meiotic double-strand break (DSB) formation, the initial event for meiotic recombination. The sequence is that of Protein DOUBLE-STRAND BREAK FORMATION from Arabidopsis thaliana (Mouse-ear cress).